The primary structure comprises 262 residues: 14-3-3 protein I (262 aa).

This sequence belongs to the 14-3-3 family. As to quaternary structure, homodimer. Forms a complex composed of CDPK1, PKA regulatory subunit PKAr and 14-3-3I; the complex is formed in merozoites in response to low extracellular level of K(+) and may play a role in microneme secretion. Interacts with CDPK1 (when phosphorylated) in a Ca(2+)-independent manner; the interaction does not regulate CDPK1 catalytic activity but is required for merozoite invasion of host erythrocytes. Interacts with PKA regulatory subunit PKAr (when phosphorylated) in a Ca(2+)-dependent manner. Interacts with histone H3 (when phosphorylated at 'Ser-28' or when phosphorylated at 'Ser-28' and 'Ser-32').

The protein resides in the cell membrane. Its subcellular location is the cytoplasm. It is found in the nucleus. In terms of biological role, adapter protein which binds to its partners, usually via a phosphoserine or phosphothreonine motif. Binding generally results in the modulation of the activity and/or cellular localization of the binding partner. Via its interaction with CDPK1 and PKAr, involved in merozoite microneme secretion and thus in merozoite invasion of host erythrocytes. The sequence is that of 14-3-3 protein I from Plasmodium falciparum (isolate 3D7).